A 564-amino-acid polypeptide reads, in one-letter code: Proline--tRNA ligase (564 aa).

The protein belongs to the class-II aminoacyl-tRNA synthetase family. ProS type 1 subfamily. In terms of assembly, homodimer.

The protein resides in the cytoplasm. It catalyses the reaction tRNA(Pro) + L-proline + ATP = L-prolyl-tRNA(Pro) + AMP + diphosphate. In terms of biological role, catalyzes the attachment of proline to tRNA(Pro) in a two-step reaction: proline is first activated by ATP to form Pro-AMP and then transferred to the acceptor end of tRNA(Pro). As ProRS can inadvertently accommodate and process non-cognate amino acids such as alanine and cysteine, to avoid such errors it has two additional distinct editing activities against alanine. One activity is designated as 'pretransfer' editing and involves the tRNA(Pro)-independent hydrolysis of activated Ala-AMP. The other activity is designated 'posttransfer' editing and involves deacylation of mischarged Ala-tRNA(Pro). The misacylated Cys-tRNA(Pro) is not edited by ProRS. The chain is Proline--tRNA ligase from Xanthomonas oryzae pv. oryzae (strain KACC10331 / KXO85).